The sequence spans 228 residues: Endonuclease V (228 aa).

Mg(2+) contacts are provided by Asp-43 and Asp-109.

This sequence belongs to the endonuclease V family. Mg(2+) serves as cofactor.

The protein resides in the cytoplasm. The catalysed reaction is Endonucleolytic cleavage at apurinic or apyrimidinic sites to products with a 5'-phosphate.. Its function is as follows. DNA repair enzyme involved in the repair of deaminated bases. Selectively cleaves double-stranded DNA at the second phosphodiester bond 3' to a deoxyinosine leaving behind the intact lesion on the nicked DNA. The polypeptide is Endonuclease V (Dictyoglomus thermophilum (strain ATCC 35947 / DSM 3960 / H-6-12)).